The primary structure comprises 505 residues: MTDSKKYILTLDEGTTSARALITDKQGNIIAVEQSEFTQYFPKEGWVEHDAIEIWNTQRSALVQVLNKSGIDPSQIEAIGITNQRETAVIWNKETGLPIYNAIVWQDQRTADYCQTFDKDTLEMVKQRSGLIINPYFSGTKVKWILDNVPNARQLAKEGKLMFGTINTWLIYRLTGGEVFVTDHTNAQRTLLYNIHTNDWDDELLKLFDIPRNILPEIKSCSEVYGYTFKGLFSKGNEQRIKIASSIGDQQSALFGQLCLEKGQVKVTYGTGCFILTNTGEEIVKSNHGLLTTVAYSFKDKVYYALEGSVMIAGAAVQWLRDNLRIVYNAIETEWYADQVKDDRRVYVVPSFTGLGSPYWDSFSRGAIFGLDRGTRREHIVRATLEAIVYQANDVVDAMRKDMKKPIEIFKVDGGAANNKFLMQFQSNISQSKVIKPTNVETTAMGAAFMVGLAVGYWENAEELKKTYKVHFELTPELSKPEVDKLIKGWKVAVQRTFKWVEEIE.

Thr15 provides a ligand contact to ADP. Positions 15, 16, and 17 each coordinate ATP. Thr15 is a binding site for sn-glycerol 3-phosphate. Arg19 contributes to the ADP binding site. Positions 85, 86, 136, and 249 each coordinate sn-glycerol 3-phosphate. Glycerol contacts are provided by Arg85, Glu86, Tyr136, Asp249, and Gln250. Thr271 and Gly314 together coordinate ADP. ATP contacts are provided by Thr271, Gly314, Gln318, and Gly415. Residues Gly415 and Asn419 each contribute to the ADP site.

The protein belongs to the FGGY kinase family.

It catalyses the reaction glycerol + ATP = sn-glycerol 3-phosphate + ADP + H(+). The protein operates within polyol metabolism; glycerol degradation via glycerol kinase pathway; sn-glycerol 3-phosphate from glycerol: step 1/1. Its activity is regulated as follows. Inhibited by fructose 1,6-bisphosphate (FBP). In terms of biological role, key enzyme in the regulation of glycerol uptake and metabolism. Catalyzes the phosphorylation of glycerol to yield sn-glycerol 3-phosphate. The chain is Glycerol kinase from Mycoplasma mycoides subsp. mycoides SC (strain CCUG 32753 / NCTC 10114 / PG1).